The primary structure comprises 1123 residues: Phytochrome 1 (1123 aa).

Residues 1–15 are compositionally biased toward low complexity; it reads MSTPKKTYSSTSSAK. Residues 1–20 are disordered; the sequence is MSTPKKTYSSTSSAKSKAHS. The GAF domain occupies 216–395; sequence DIGLLCDTVV…VFGLQLNMEV (180 aa). Cys321 serves as a coordination point for phytochromobilin. PAS domains lie at 610–681 and 744–815; these read VANE…LRGE and DYKT…TKFM. The 221-residue stretch at 895–1115 folds into the Histidine kinase domain; the sequence is YIRQEIKNPL…VVNVELPMAQ (221 aa).

The protein belongs to the phytochrome family. As to quaternary structure, homodimer. Contains one covalently linked phytochromobilin chromophore.

It is found in the cytoplasm. Its function is as follows. Regulatory photoreceptor which exists in two forms that are reversibly interconvertible by light: the Pr form that absorbs maximally in the red region of the spectrum and the Pfr form that absorbs maximally in the far-red region. Photoconversion of Pr to Pfr induces an array of morphogenetic responses, whereas reconversion of Pfr to Pr cancels the induction of those responses. Pfr controls the expression of a number of nuclear genes including those encoding the small subunit of ribulose-bisphosphate carboxylase, chlorophyll A/B binding protein, protochlorophyllide reductase, rRNA, etc. It also controls the expression of its own gene(s) in a negative feedback fashion. Mediates chloroplast avoidance movement in cytoplasm. The protein is Phytochrome 1 (PHY1) of Physcomitrium patens (Spreading-leaved earth moss).